The sequence spans 140 residues: Large ribosomal subunit protein uL14 (140 aa).

The protein belongs to the universal ribosomal protein uL14 family. Part of the 50S ribosomal subunit. Forms a cluster with proteins L3 and L24e, part of which may contact the 16S rRNA in 2 intersubunit bridges.

Its function is as follows. Binds to 23S rRNA. Forms part of two intersubunit bridges in the 70S ribosome. The polypeptide is Large ribosomal subunit protein uL14 (Nitrosopumilus maritimus (strain SCM1)).